The sequence spans 327 residues: Fructose import binding protein FruE (327 aa).

A signal peptide spans 1 to 22 (MKNWKKAIALVASAAALVSVAA). Cysteine 23 is lipidated: N-palmitoyl cysteine. Cysteine 23 is lipidated: S-diacylglycerol cysteine.

It belongs to the bacterial solute-binding protein 2 family. The complex is composed of an ATP-binding protein (FruK), two transmembrane proteins (FruF and FruG) and a solute-binding protein (FruE).

It is found in the cell membrane. Its function is as follows. Part of the high-affinity ABC transporter complex FruEKFG involved in fructose uptake. Can also transport ribose and xylose, with lower affinity. Binds fructose, ribose and xylose, with fructose as the preferred substrate. The protein is Fructose import binding protein FruE of Bifidobacterium longum (strain NCC 2705).